A 311-amino-acid polypeptide reads, in one-letter code: DNA replication terminus site-binding protein (311 aa).

It belongs to the Tus family.

The protein localises to the cytoplasm. Its function is as follows. Trans-acting protein required for termination of DNA replication. Binds to DNA replication terminator sequences (terA to terF) to prevent the passage of replication forks. The termination efficiency will be affected by the affinity of this protein for the terminator sequence. In Yersinia pseudotuberculosis serotype I (strain IP32953), this protein is DNA replication terminus site-binding protein.